The sequence spans 129 residues: Holo-[acyl-carrier-protein] synthase (129 aa).

Mg(2+) contacts are provided by Asp8 and Glu58.

This sequence belongs to the P-Pant transferase superfamily. AcpS family. The cofactor is Mg(2+).

It localises to the cytoplasm. The enzyme catalyses apo-[ACP] + CoA = holo-[ACP] + adenosine 3',5'-bisphosphate + H(+). Transfers the 4'-phosphopantetheine moiety from coenzyme A to a Ser of acyl-carrier-protein. This is Holo-[acyl-carrier-protein] synthase from Geobacillus kaustophilus (strain HTA426).